A 430-amino-acid chain; its full sequence is Rho GTPase-activating protein 2 (430 aa).

A disordered region spans residues 1–36 (MTGLVMMTKGGGCGGGGKGGRRKSTAEEEEEEEQNQ). Over residues 9–18 (KGGGCGGGGK) the composition is skewed to gly residues. The CRIB domain occupies 80 to 93 (IGWPTNVRHITHVT). In terms of domain architecture, Rho-GAP spans 125–310 (VSAESMQCSY…TLAEREENAT (186 aa)). The segment at 307-372 (ENATGSEGYS…HLSRHSTHED (66 aa)) is disordered. A compositionally biased stretch (low complexity) spans 316 to 326 (SPSHSSNSQTD). Positions 347 to 356 (ECGEEEEVEE) are enriched in acidic residues. Residues 357–371 (VEQHQEHLSRHSTHE) are compositionally biased toward basic and acidic residues.

Homodimerizes via its Rho-GAP domain and forms a tetrameric complex (2:2) with ARAC1/ROP3, ARAC2/ROP7, ARAC4/ROP2, ARAC5/ROP4, ARAC7/ROP9 or ARAC11/ROP1.

Acts as a GTPase activator for the Rac-type GTPase by converting it to an inactive GDP-bound state. The chain is Rho GTPase-activating protein 2 (ROPGAP2) from Arabidopsis thaliana (Mouse-ear cress).